A 320-amino-acid chain; its full sequence is Cytosolic Fe-S cluster assembly factor NUBP1 (320 aa).

Residue Met1 is modified to N-acetylmethionine. Residues Cys8, Cys22, Cys25, and Cys31 each contribute to the [4Fe-4S] cluster site. An ATP-binding site is contributed by 62-69 (GKGGVGKS). Residues Cys235 and Cys238 each coordinate [4Fe-4S] cluster. Phosphoserine is present on Ser319.

The protein belongs to the Mrp/NBP35 ATP-binding proteins family. NUBP1/NBP35 subfamily. In terms of assembly, heterotetramer of 2 NUBP1 and 2 NUBP2 chains. Interacts with KIFC1. Interacts with the BBS/CCT complex subunit CCT1. [4Fe-4S] cluster serves as cofactor.

The protein resides in the cytoplasm. Its subcellular location is the nucleus. It is found in the cell projection. It localises to the cytoskeleton. The protein localises to the cilium axoneme. The protein resides in the cilium basal body. Its subcellular location is the microtubule organizing center. It is found in the centrosome. It localises to the centriole. In terms of biological role, component of the cytosolic iron-sulfur (Fe/S) protein assembly (CIA) machinery. Required for maturation of extramitochondrial Fe-S proteins. The NUBP1-NUBP2 heterotetramer forms a Fe-S scaffold complex, mediating the de novo assembly of an Fe-S cluster and its transfer to target apoproteins. Implicated in the regulation of centrosome duplication. Negatively regulates cilium formation and structure. The sequence is that of Cytosolic Fe-S cluster assembly factor NUBP1 from Rattus norvegicus (Rat).